Reading from the N-terminus, the 574-residue chain is MPKFDVSKRDLERLVGKTFSVEEWEDLFLYAKCELDDVWEENGEIYFKADSKDTNRPDLWSAEGIARQIRFALGFQKGLPKYEIEKSDVVVYVDEKLKDIRPYGVYAIVEGLNIDEEALRQMINLQEKVALTFGRRRREVAIGIFDFDKVKPPIYYRAAEKTEKFVPLGYDEEMTLEEILEKHEKGREYGHLIKDKPYYPLLVDSEGKVLSMPPVINSETTGRVTTETKNVFVDITGWDLNKVMLALNVVVTALAERGGKIKSVKVVYPDFEIETPDLTPKEFEVELDYIRKLAGLELSDGEIKELLERMMYEVELENRRAKLRYPAFRDDIMHARDVLEDVLIAYGYNEIEPEEPKLAVQGRGDKFIEFEDAVRELMVGFGLQEVMTFNLTNREAQYDRMNLPCGEHQEECRDYFNHPPAELVEIENPISPKWSALRNWLIPSLLDFLSQNTHEEYPQKLFEVGKATLIDESRETKTVSESKLAVALAHPRVTFTEAKEILEGVMRHLGFEYELEEAEHPSFIPGRVGKIIVNGETIGVIGEIHPAVLENWGIEMPVAAFELFLAPLYTEPYL.

Residues 278–353 (LTPKEFEVEL…IAYGYNEIEP (76 aa)) form the B5 domain. Residues D331, D337, E340, and D341 each coordinate Mg(2+).

It belongs to the phenylalanyl-tRNA synthetase beta subunit family. Type 2 subfamily. In terms of assembly, tetramer of two alpha and two beta subunits. It depends on Mg(2+) as a cofactor.

The protein localises to the cytoplasm. The enzyme catalyses tRNA(Phe) + L-phenylalanine + ATP = L-phenylalanyl-tRNA(Phe) + AMP + diphosphate + H(+). The chain is Phenylalanine--tRNA ligase beta subunit from Thermococcus kodakarensis (strain ATCC BAA-918 / JCM 12380 / KOD1) (Pyrococcus kodakaraensis (strain KOD1)).